The following is a 104-amino-acid chain: MSEFTNVTIIREANVYFDGGVVSRTVVFPDGTKKTLGIMQPGEYTFTTGAPEIMEILSGELDLKLPGSDAWNRVGGGESFDVPANSSFTMKVLSLTDYCCSFLG.

This sequence belongs to the nucleoside phosphorylase PpnP family.

It carries out the reaction a purine D-ribonucleoside + phosphate = a purine nucleobase + alpha-D-ribose 1-phosphate. The catalysed reaction is adenosine + phosphate = alpha-D-ribose 1-phosphate + adenine. The enzyme catalyses cytidine + phosphate = cytosine + alpha-D-ribose 1-phosphate. It catalyses the reaction guanosine + phosphate = alpha-D-ribose 1-phosphate + guanine. It carries out the reaction inosine + phosphate = alpha-D-ribose 1-phosphate + hypoxanthine. The catalysed reaction is thymidine + phosphate = 2-deoxy-alpha-D-ribose 1-phosphate + thymine. The enzyme catalyses uridine + phosphate = alpha-D-ribose 1-phosphate + uracil. It catalyses the reaction xanthosine + phosphate = alpha-D-ribose 1-phosphate + xanthine. In terms of biological role, catalyzes the phosphorolysis of diverse nucleosides, yielding D-ribose 1-phosphate and the respective free bases. Can use uridine, adenosine, guanosine, cytidine, thymidine, inosine and xanthosine as substrates. Also catalyzes the reverse reactions. The chain is Pyrimidine/purine nucleoside phosphorylase from Geobacter sulfurreducens (strain ATCC 51573 / DSM 12127 / PCA).